Here is a 391-residue protein sequence, read N- to C-terminus: MAIFRDRTDKQVDHDRAIEDKRRHRQLVEKSIKENLGDILSEESIVGQSKNKKFKIPIKSIKEYQFVYGKNSKGVATGTGEEKRGDKIESGSKKAMGKGNKGAGNEEGDEIYETEITLDELMEYISDELNLPNLDEKKYSEIITDSCGKKKGYQRHGIRPRLAKKRTVMAKISRKQSKKRALIEEGKDYKTERFPFREEDLRYYKVKMQPKKASNAVMIFIMDASGSMDSTKKYLARSYFFVLSRFLKRKYNNIAFEFIYHTTIAKRVSEYEFFHKSESGGTYISSGIVEAIKLIDEKYPPSEWNIYPVYASDGDNWSEDNVKAIESVKEICKISNMFGYAELLPSTYTQTMYYKFNKEINEKNFISVVIKEKKDLWEALKTMLKQELKED.

Disordered stretches follow at residues 1-23 (MAIF…DKRR) and 75-107 (VATG…GNEE). Basic and acidic residues predominate over residues 80 to 92 (GEEKRGDKIESGS).

This sequence belongs to the UPF0229 family.

The sequence is that of UPF0229 protein CLL_A3091 from Clostridium botulinum (strain Eklund 17B / Type B).